We begin with the raw amino-acid sequence, 114 residues long: uncharacterized protein (114 aa).

This is an uncharacterized protein from Sputnik virophage.